Here is a 274-residue protein sequence, read N- to C-terminus: MQIHSSIADLRSALKNRGRVVFVPTMGNLHAGHISLMTQARAHGDTVVASIFVNRLQFGPNEDFDKYPRTFQADCDKLAAAGVDVLFAPTEADLYPEPQEYTVEPPAIQNILDGEFRPGHFRGVATVVLKLFNCVQPQAAMFGKKDYQQLMVIRNMTRQLALPIDIIGGETVRAEDGLALSSRNGYLSAAERTEAPRLYRLLNEIRAAIRAGETDTVKLENEAIAALTAAGWKNDYVAVRQQSDLSMPKGVNAPLVALAASRLGSTRLIDNIEI.

26–33 (MGNLHAGH) lines the ATP pocket. Catalysis depends on His33, which acts as the Proton donor. (R)-pantoate is bound at residue Gln57. Gln57 serves as a coordination point for beta-alanine. ATP is bound at residue 143–146 (GKKD). Gln149 serves as a coordination point for (R)-pantoate. ATP is bound by residues Val172 and 180-183 (LSSR).

The protein belongs to the pantothenate synthetase family. In terms of assembly, homodimer.

The protein localises to the cytoplasm. It carries out the reaction (R)-pantoate + beta-alanine + ATP = (R)-pantothenate + AMP + diphosphate + H(+). Its pathway is cofactor biosynthesis; (R)-pantothenate biosynthesis; (R)-pantothenate from (R)-pantoate and beta-alanine: step 1/1. Functionally, catalyzes the condensation of pantoate with beta-alanine in an ATP-dependent reaction via a pantoyl-adenylate intermediate. This Dechloromonas aromatica (strain RCB) protein is Pantothenate synthetase.